The primary structure comprises 142 residues: Protein Turandot X (142 aa).

A signal peptide spans 1–22 (MGLSIGSLLICVFLGIVPFATA).

The protein belongs to the Turandot family.

It localises to the secreted. In terms of biological role, a humoral factor that may play a role in stress tolerance. This is Protein Turandot X from Drosophila melanogaster (Fruit fly).